The sequence spans 324 residues: MQSSGLLKPRIIDVQSVSPVQAKVVMEPFERGYGHTLGNALRRILLSSMVGYAPTEVGIDGVLHEYSTVDGVQEDVVDILLNLKGVVFKLHNRDVVNLKLVKEGEGAVRAGDIELPHDVEIINPEHVIAHLSPGGKLAMEIKVEKGRGYVPGNVRNLGDAKTIGKLVLDASFSPIRRVAYAVESARVEQRTDLDKLIVDIETNGVVEPEEAIRYAARVLMEQLSVFADLEGTAPVAEASKPAQVDPVLLRPVDDLELTVRSANCLKAENIYYIGDLIQRTENELLKTPNLGRKSLNEIKEVLAARGLTLGMKLENWPPAGLEKA.

The alpha N-terminal domain (alpha-NTD) stretch occupies residues 1-230; sequence MQSSGLLKPR…EQLSVFADLE (230 aa). An alpha C-terminal domain (alpha-CTD) region spans residues 244–324; sequence VDPVLLRPVD…NWPPAGLEKA (81 aa).

Belongs to the RNA polymerase alpha chain family. As to quaternary structure, homodimer. The RNAP catalytic core consists of 2 alpha, 1 beta, 1 beta' and 1 omega subunit. When a sigma factor is associated with the core the holoenzyme is formed, which can initiate transcription.

The enzyme catalyses RNA(n) + a ribonucleoside 5'-triphosphate = RNA(n+1) + diphosphate. Its function is as follows. DNA-dependent RNA polymerase catalyzes the transcription of DNA into RNA using the four ribonucleoside triphosphates as substrates. The sequence is that of DNA-directed RNA polymerase subunit alpha from Dechloromonas aromatica (strain RCB).